The primary structure comprises 24 residues: KFKVVTTFTVIQDIAQNVAGDAAT.

It is found in the periplasm. Functionally, may be involved in iron uptake. This is Iron-regulated 31 kDa protein from Haemophilus influenzae.